Consider the following 222-residue polypeptide: Ribonuclease HII (222 aa).

The region spanning 17 to 206 is the RNase H type-2 domain; sequence DLVAGVDEVG…VRAAHEARAS (190 aa). A divalent metal cation contacts are provided by Asp23, Glu24, and Asp115.

Belongs to the RNase HII family. Requires Mn(2+) as cofactor. The cofactor is Mg(2+).

The protein resides in the cytoplasm. It catalyses the reaction Endonucleolytic cleavage to 5'-phosphomonoester.. Endonuclease that specifically degrades the RNA of RNA-DNA hybrids. The polypeptide is Ribonuclease HII (Pseudomonas savastanoi pv. phaseolicola (strain 1448A / Race 6) (Pseudomonas syringae pv. phaseolicola (strain 1448A / Race 6))).